Here is a 494-residue protein sequence, read N- to C-terminus: Ectonucleoside triphosphate diphosphohydrolase 8 (494 aa).

The Cytoplasmic segment spans residues 1–8 (MRLSWKER). A helical membrane pass occupies residues 9–29 (VFMVLLGVAAASGLTMLILIL). Topologically, residues 30 to 465 (VKATNVLLPA…LTQWRAQSYS (436 aa)) are extracellular. Cys-78 and Cys-102 are oxidised to a cystine. Glu-168 serves as the catalytic Proton acceptor. Cysteines 245 and 291 form a disulfide. 2 N-linked (GlcNAc...) asparagine glycosylation sites follow: Asn-299 and Asn-303. The cysteines at positions 328 and 334 are disulfide-linked. Asn-362 carries N-linked (GlcNAc...) asparagine glycosylation. The cysteines at positions 380 and 402 are disulfide-linked. Residues 466–486 (IWIAGVVFAVLTLVAILGAAA) traverse the membrane as a helical segment. Topologically, residues 487-494 (VQLFWTQD) are cytoplasmic.

This sequence belongs to the GDA1/CD39 NTPase family. Ca(2+) is required as a cofactor. It depends on Mg(2+) as a cofactor. N-glycosylated. In terms of tissue distribution, present in liver, and at lower level in jejunum and kidney. Limited to the canalicular domain of hepatocytes (at protein level).

Its subcellular location is the cell membrane. It catalyses the reaction a ribonucleoside 5'-triphosphate + 2 H2O = a ribonucleoside 5'-phosphate + 2 phosphate + 2 H(+). Canalicular ectonucleoside NTPDase responsible for the main hepatic NTPDase activity. Ectonucleoside NTPDases catalyze the hydrolysis of gamma- and beta-phosphate residues of nucleotides, playing a central role in concentration of extracellular nucleotides. Has activity toward ATP, ADP, UTP and UDP, but not toward AMP. This Rattus norvegicus (Rat) protein is Ectonucleoside triphosphate diphosphohydrolase 8 (Entpd8).